Here is a 148-residue protein sequence, read N- to C-terminus: Deoxyuridine 5'-triphosphate nucleotidohydrolase (148 aa).

Substrate-binding positions include 67–69, Asn80, 84–86, and Met94; these read RSG and LID.

Belongs to the dUTPase family. It depends on Mg(2+) as a cofactor.

The catalysed reaction is dUTP + H2O = dUMP + diphosphate + H(+). Its pathway is pyrimidine metabolism; dUMP biosynthesis; dUMP from dCTP (dUTP route): step 2/2. Its function is as follows. This enzyme is involved in nucleotide metabolism: it produces dUMP, the immediate precursor of thymidine nucleotides and it decreases the intracellular concentration of dUTP so that uracil cannot be incorporated into DNA. The chain is Deoxyuridine 5'-triphosphate nucleotidohydrolase from Ralstonia pickettii (strain 12J).